Reading from the N-terminus, the 703-residue chain is Protein FAR1-RELATED SEQUENCE 6 (703 aa).

Positions 1 to 29 (MERSESVDEDVQASAYLENDEVRERDDPM) are disordered. The FAR1 domain occupies 99–184 (NYYNCYASEV…TLDHNHLLGC (86 aa)). One can recognise an MULE domain in the interval 297–392 (VIFIDSSYIS…SLTHIMRKIP (96 aa)). The segment at 584-620 (FEVLYNRSVGEVRCICSCFNFYGYLCRHALCVLNFNG) adopts an SWIM-type zinc-finger fold.

The protein belongs to the FHY3/FAR1 family. Expressed in hypocotyls, rosette and cauline leaves, inflorescences stems, flowers and siliques.

Its subcellular location is the nucleus. Putative transcription activator involved in regulating light control of development. May have a role in controlling flowering time. The protein is Protein FAR1-RELATED SEQUENCE 6 (FRS6) of Arabidopsis thaliana (Mouse-ear cress).